Here is a 124-residue protein sequence, read N- to C-terminus: PEP-dependent dihydroxyacetone kinase 1, phosphoryl donor subunit DhaM (124 aa).

Positions 4–124 (PYGVVIISHS…AANLKTIEIK (121 aa)) constitute a PTS EIIA type-4 domain. The active-site Tele-phosphohistidine intermediate is His-12.

Belongs to the PEP-utilizing enzyme family. Homodimer. The dihydroxyacetone kinase complex is composed of a homodimer of DhaM, a homodimer of DhaK and the subunit DhaL.

Its subcellular location is the cytoplasm. The catalysed reaction is dihydroxyacetone + phosphoenolpyruvate = dihydroxyacetone phosphate + pyruvate. In terms of biological role, component of the dihydroxyacetone kinase complex, which is responsible for the phosphoenolpyruvate (PEP)-dependent phosphorylation of dihydroxyacetone. DhaM serves as the phosphoryl donor. Is phosphorylated by phosphoenolpyruvate in an EI- and HPr-dependent reaction, and a phosphorelay system on histidine residues finally leads to phosphoryl transfer to DhaL and dihydroxyacetone. The polypeptide is PEP-dependent dihydroxyacetone kinase 1, phosphoryl donor subunit DhaM (Listeria innocua serovar 6a (strain ATCC BAA-680 / CLIP 11262)).